We begin with the raw amino-acid sequence, 475 residues long: Methylenetetrahydrofolate--tRNA-(uracil-5-)-methyltransferase TrmFO (475 aa).

Position 13–18 (13–18 (GAGLAG)) interacts with FAD.

The protein belongs to the MnmG family. TrmFO subfamily. FAD serves as cofactor.

The protein localises to the cytoplasm. The enzyme catalyses uridine(54) in tRNA + (6R)-5,10-methylene-5,6,7,8-tetrahydrofolate + NADH + H(+) = 5-methyluridine(54) in tRNA + (6S)-5,6,7,8-tetrahydrofolate + NAD(+). It carries out the reaction uridine(54) in tRNA + (6R)-5,10-methylene-5,6,7,8-tetrahydrofolate + NADPH + H(+) = 5-methyluridine(54) in tRNA + (6S)-5,6,7,8-tetrahydrofolate + NADP(+). Functionally, catalyzes the folate-dependent formation of 5-methyl-uridine at position 54 (M-5-U54) in all tRNAs. This is Methylenetetrahydrofolate--tRNA-(uracil-5-)-methyltransferase TrmFO from Bradyrhizobium diazoefficiens (strain JCM 10833 / BCRC 13528 / IAM 13628 / NBRC 14792 / USDA 110).